An 89-amino-acid chain; its full sequence is Small ribosomal subunit protein uS15 (89 aa).

This sequence belongs to the universal ribosomal protein uS15 family. In terms of assembly, part of the 30S ribosomal subunit. Forms a bridge to the 50S subunit in the 70S ribosome, contacting the 23S rRNA.

Functionally, one of the primary rRNA binding proteins, it binds directly to 16S rRNA where it helps nucleate assembly of the platform of the 30S subunit by binding and bridging several RNA helices of the 16S rRNA. In terms of biological role, forms an intersubunit bridge (bridge B4) with the 23S rRNA of the 50S subunit in the ribosome. The polypeptide is Small ribosomal subunit protein uS15 (Beijerinckia indica subsp. indica (strain ATCC 9039 / DSM 1715 / NCIMB 8712)).